A 108-amino-acid chain; its full sequence is PTS system fructose-like EIIB component 1 (108 aa).

Residues 1-104 form the PTS EIIB type-2 domain; that stretch reads MSKKLIALCA…IIKEIEEMIA (104 aa). Residue Cys11 is the Phosphocysteine intermediate of the active site. Position 11 is a phosphocysteine; by EIIA (Cys11).

The protein resides in the cytoplasm. The enzyme catalyses D-fructose(out) + N(pros)-phospho-L-histidyl-[protein] = D-fructose 1-phosphate(in) + L-histidyl-[protein]. Its function is as follows. The phosphoenolpyruvate-dependent sugar phosphotransferase system (sugar PTS), a major carbohydrate active transport system, catalyzes the phosphorylation of incoming sugar substrates concomitantly with their translocation across the cell membrane. The enzyme II FryABC PTS system is involved in fructose transport. The chain is PTS system fructose-like EIIB component 1 (fryB) from Escherichia coli O157:H7.